Consider the following 82-residue polypeptide: U10-myrmicitoxin-Mri1c (82 aa).

The signal sequence occupies residues 1–26 (MRLSYVSLTLAIIFVMAIVHAPETEA). A propeptide spanning residues 27 to 52 (KAYPEADAVGEASAVGEADAVGVADP) is cleaved from the precursor. An Isoleucine amide modification is found at Ile-81.

It belongs to the formicidae venom precursor-01 superfamily. Expressed by the venom gland.

It localises to the secreted. Functionally, induces paralysis 5 minutes after injection into blowflies (L.caesar). In most cases is not lethal 24 hours after injection, but paralysis is irreversible. May have antimicrobial properties, like most ant linear peptides. The chain is U10-myrmicitoxin-Mri1c from Manica rubida (European giant red ant).